Reading from the N-terminus, the 238-residue chain is ATP synthase subunit a, chloroplastic (238 aa).

Helical transmembrane passes span 27-47 (GQVLITSWVVLGILAVLSFLG), 86-106 (VPFLGTIFLFIFVSNWSGALL), 125-145 (INTTVALALLTSISYFYAGIS), 190-210 (LVVGVLVALVPLIIPIPIMLL), and 211-231 (GVFTSAIQALVFATLAGAYIN).

The protein belongs to the ATPase A chain family. As to quaternary structure, F-type ATPases have 2 components, F(1) - the catalytic core - and F(0) - the membrane proton channel. F(1) has five subunits: alpha(3), beta(3), gamma(1), delta(1), epsilon(1). F(0) has four main subunits: a(1), b(1), b'(1) and c(10-14). The alpha and beta chains form an alternating ring which encloses part of the gamma chain. F(1) is attached to F(0) by a central stalk formed by the gamma and epsilon chains, while a peripheral stalk is formed by the delta, b and b' chains.

Its subcellular location is the plastid. It is found in the chloroplast thylakoid membrane. Functionally, f(1)F(0) ATP synthase produces ATP from ADP in the presence of a proton or sodium gradient. F-type ATPases consist of two structural domains, F(1) containing the extramembraneous catalytic core and F(0) containing the membrane proton channel, linked together by a central stalk and a peripheral stalk. During catalysis, ATP synthesis in the catalytic domain of F(1) is coupled via a rotary mechanism of the central stalk subunits to proton translocation. This Chlamydomonas reinhardtii (Chlamydomonas smithii) protein is ATP synthase subunit a, chloroplastic.